A 134-amino-acid polypeptide reads, in one-letter code: Small ribosomal subunit protein bS16 (134 aa).

The tract at residues 115 to 134 (AKLRRRQAKKAAEAAGSAEG) is disordered.

It belongs to the bacterial ribosomal protein bS16 family.

The sequence is that of Small ribosomal subunit protein bS16 from Chlorobaculum tepidum (strain ATCC 49652 / DSM 12025 / NBRC 103806 / TLS) (Chlorobium tepidum).